Reading from the N-terminus, the 108-residue chain is AGKYFEATDKNFQTEILDSDKAVLVDFWASWCGPCMMLGPVIEQLADDYEGKAIIAKLNVDENPNIAGQYGIRSIPTMLIIKGGKVVDQMVGALPKNMIAKKIDEHIG.

The Thioredoxin domain occupies 2 to 108 (GKYFEATDKN…IAKKIDEHIG (107 aa)). Residues cysteine 32 and cysteine 35 are joined by a disulfide bond.

It belongs to the thioredoxin family.

Functionally, participates in various redox reactions through the reversible oxidation of its active center dithiol to a disulfide and catalyzes dithiol-disulfide exchange reactions. This Chlorobaculum thiosulfatiphilum (Chlorobium limicola f.sp. thiosulfatophilum) protein is Thioredoxin (trxA).